The following is a 556-amino-acid chain: Acetyl-coenzyme A thioesterase (556 aa).

In terms of domain architecture, HotDog ACOT-type 1 spans 6–118 (APGEVLMSQA…FSTFVAKPVG (113 aa)). K34 carries the N6-succinyllysine modification. CoA is bound by residues 54–56 (TAS) and 83–85 (STS). At K97 the chain carries N6-succinyllysine. Residue R145 coordinates CoA. An N6-succinyllysine mark is found at K160 and K229. The 116-residue stretch at 180 to 295 (MGTSVQSIEL…FLIYNAVDDQ (116 aa)) folds into the HotDog ACOT-type 2 domain. 235-237 (KFR) contacts CoA. The START domain occupies 327 to 536 (GRKYVISHKK…GGWSKSIEEA (210 aa)).

In terms of assembly, homodimer or homotetramer.

It localises to the cytoplasm. The protein localises to the cytosol. It catalyses the reaction acetyl-CoA + H2O = acetate + CoA + H(+). The enzyme catalyses butanoyl-CoA + H2O = butanoate + CoA + H(+). The catalysed reaction is hexanoyl-CoA + H2O = hexanoate + CoA + H(+). The protein operates within lipid metabolism; fatty acid metabolism. Allosterically regulated by ATP (activator) and ADP (inhibitor). Cold labile, it dissociates into inactive monomers at low temperature. Functionally, catalyzes the hydrolysis of acyl-CoAs into free fatty acids and coenzyme A (CoASH), regulating their respective intracellular levels. Preferentially hydrolyzes acetyl-CoA. The sequence is that of Acetyl-coenzyme A thioesterase (Acot12) from Mus musculus (Mouse).